The sequence spans 134 residues: Calvin cycle protein CP12-3, chloroplastic (134 aa).

The disordered stretch occupies residues 1–21; it reads MISGSATASHGRVLLPSQRER. The transit peptide at 1–42 directs the protein to the chloroplast; it reads MISGSATASHGRVLLPSQRERRPVSTGSNILRFRETVPRQFS. 2 disulfide bridges follow: C78–C87 and C120–C129.

Belongs to the CP12 family. In terms of assembly, monomer. Component of a complex that contains two dimers of PRK, two tetramers of GAPDH and CP12. CP12 associates with GAPDH, causing its conformation to change. This GAPDH/CP12 complex binds PRK to form a half-complex (one unit). This unit probably dimerizes due partially to interactions between the enzymes of each unit. Post-translationally, contains two disulfide bonds; only the oxidized protein, with two disulfide bonds, is active in complex formation. The C-terminal disulfide is involved in the interaction with GAPDH and the N-terminal disulfide mediates the binding of PRK with this binary complex. Mostly expressed, at low levels, in stems and, to a lesser extent, in leaves and roots.

It is found in the plastid. Its subcellular location is the chloroplast. Acts as a linker essential in the assembly of a core complex of PRK/GAPDH. Coordinates the reversible inactivation of chloroplast enzymes GAPDH and PRK during darkness in photosynthetic tissues. The protein is Calvin cycle protein CP12-3, chloroplastic (CP12-3) of Arabidopsis thaliana (Mouse-ear cress).